The primary structure comprises 268 residues: tRNA pseudouridine synthase A (268 aa).

D52 serves as the catalytic Nucleophile. Y110 serves as a coordination point for substrate.

It belongs to the tRNA pseudouridine synthase TruA family. As to quaternary structure, homodimer.

It catalyses the reaction uridine(38/39/40) in tRNA = pseudouridine(38/39/40) in tRNA. Formation of pseudouridine at positions 38, 39 and 40 in the anticodon stem and loop of transfer RNAs. This chain is tRNA pseudouridine synthase A, found in Prochlorococcus marinus subsp. pastoris (strain CCMP1986 / NIES-2087 / MED4).